A 240-amino-acid polypeptide reads, in one-letter code: tRNA (guanine-N(1)-)-methyltransferase (240 aa).

Residues glycine 111 and 130–135 (IGDYVI) contribute to the S-adenosyl-L-methionine site.

The protein belongs to the RNA methyltransferase TrmD family. Homodimer.

The protein resides in the cytoplasm. It catalyses the reaction guanosine(37) in tRNA + S-adenosyl-L-methionine = N(1)-methylguanosine(37) in tRNA + S-adenosyl-L-homocysteine + H(+). Specifically methylates guanosine-37 in various tRNAs. This is tRNA (guanine-N(1)-)-methyltransferase from Mycoplasma capricolum subsp. capricolum (strain California kid / ATCC 27343 / NCTC 10154).